Here is a 530-residue protein sequence, read N- to C-terminus: 6-phosphofructo-2-kinase/fructose-2,6-bisphosphatase 2 (530 aa).

Positions 1–15 are enriched in polar residues; it reads MSGASSSEQNNNSYE. Residues 1 to 21 form a disordered region; it reads MSGASSSEQNNNSYETKPPNL. Position 2 is an N-acetylserine (Ser-2). Positions 2–248 are 6-phosphofructo-2-kinase; it reads SGASSSEQNN…VYYLMNIHVQ (247 aa). Ser-29 is modified (phosphoserine; by PKA). 45 to 53 is a binding site for ATP; sequence GLPARGKTY. Residues Arg-78 and Arg-102 each contribute to the beta-D-fructose 6-phosphate site. Residue Asp-128 is part of the active site. The beta-D-fructose 6-phosphate site is built by Thr-130 and Arg-136. The active site involves Cys-158. 167–172 provides a ligand contact to ATP; the sequence is NILEVK. Positions 172, 193, and 197 each coordinate beta-D-fructose 6-phosphate. The segment at 249–530 is fructose-2,6-bisphosphatase; the sequence is PRTIYLCRHG…PPALASCPCH (282 aa). Residue Arg-256 participates in beta-D-fructose 2,6-bisphosphate binding. The Tele-phosphohistidine intermediate role is filled by His-257. Gly-269 lines the beta-D-fructose 2,6-bisphosphate pocket. Catalysis depends on Glu-326, which acts as the Proton donor/acceptor. Residues Tyr-337, Arg-351, Lys-355, Tyr-366, Gln-392, and Arg-396 each coordinate beta-D-fructose 2,6-bisphosphate. ATP is bound at residue 348-351; sequence FALR. ATP is bound by residues 392-396 and Tyr-428; that span reads QAVMR. A disordered region spans residues 446 to 512; the sequence is RDKPTNNFPK…GPTSRRPKSH (67 aa). A compositionally biased stretch (polar residues) spans 450-476; it reads TNNFPKNQTPVRMRRNSFTPLSSSNTI. Position 466 is a phosphoserine; by AMPK and PKA (Ser-466). Phosphothreonine is present on Thr-468. Thr-475 carries the phosphothreonine; by PKC modification. Phosphoserine occurs at positions 483 and 493.

In the C-terminal section; belongs to the phosphoglycerate mutase family. As to quaternary structure, homodimer. Forms a heterodimer with PFKFB3. Phosphorylation by AMPK stimulates activity.

It catalyses the reaction beta-D-fructose 2,6-bisphosphate + H2O = beta-D-fructose 6-phosphate + phosphate. The catalysed reaction is beta-D-fructose 6-phosphate + ATP = beta-D-fructose 2,6-bisphosphate + ADP + H(+). Its activity is regulated as follows. Phosphorylation results in the activation of the kinase activity. Functionally, synthesis and degradation of fructose 2,6-bisphosphate. This chain is 6-phosphofructo-2-kinase/fructose-2,6-bisphosphatase 2 (PFKFB2), found in Pongo abelii (Sumatran orangutan).